The primary structure comprises 463 residues: Glucagon-like peptide 1 receptor (463 aa).

An N-terminal signal peptide occupies residues 1–21 (MASTPSLLRLALLLLGAVGRA). Residues 22 to 139 (GPRPQGTTVS…KRGERNFPEE (118 aa)) are Extracellular-facing. 3 disulfides stabilise this stretch: cysteine 46–cysteine 71, cysteine 62–cysteine 104, and cysteine 85–cysteine 126. Asparagine 63, asparagine 82, and asparagine 115 each carry an N-linked (GlcNAc...) asparagine glycan. Residues 140 to 164 (QLLSLYIIYTVGYALSFSALVIASA) form a helical membrane-spanning segment. Residues 165 to 175 (ILVGFRHLHCT) lie on the Cytoplasmic side of the membrane. Residues 176–201 (RNYIHLNLFASFILRALSVFIKDAAL) traverse the membrane as a helical segment. At 202–227 (KWMYSTAAQQHQWDGLLSYQDSLGCR) the chain is on the extracellular side. Cysteine 226 and cysteine 296 form a disulfide bridge. A helical transmembrane segment spans residues 228–251 (LVFLLMQYCVAANYYWLLVEGVYL). Residues 252–265 (YTLLAFSVFSEQRI) lie on the Cytoplasmic side of the membrane. The helical transmembrane segment at 266–290 (FKLYLSIGWGVPLLFVIPWGIVKYL) threads the bilayer. Over 291–305 (YEDEGCWTRNSNMNY) the chain is Extracellular. A helical transmembrane segment spans residues 306 to 328 (WLIIRLPILFAIGVNFLIFIRVI). Over 329 to 348 (CIVVSKLKANLMCKTDIKCR) the chain is Cytoplasmic. Cysteine 341 is modified (ADP-ribosylcysteine). Arginine 348 carries the post-translational modification ADP-ribosylarginine. The chain crosses the membrane as a helical span at residues 349–370 (LAKSTLTLIPLLGTHEVIFAFV). The important for allosteric inhibitor binding stretch occupies residues 352-355 (STLT). Topologically, residues 371–383 (MDEHARGTLRFIK) are extracellular. The chain crosses the membrane as a helical span at residues 384-404 (LFTELSFTSFQGLMVAILYCF). The Cytoplasmic portion of the chain corresponds to 405–463 (VNNEVQMEFRKCWERWRLEHLNIQRDCSMKPLKCPTSSVSSGATVGSSVYAATCQSSYS).

The protein belongs to the G-protein coupled receptor 2 family. May form homodimers and heterodimers with GIPR. In terms of processing, N-glycosylation enhances cell surface expression and lengthens receptor half-life by preventing degradation in the ER. In terms of tissue distribution, detected in pancreatic islets (at protein level). Detected in pancreatic islets and lungs.

Its subcellular location is the cell membrane. G-protein coupled receptor for glucagon-like peptide 1 (GLP-1). Ligand binding triggers activation of a signaling cascade that leads to the activation of adenylyl cyclase and increased intracellular cAMP levels. Plays a role in regulating insulin secretion in response to GLP-1. The sequence is that of Glucagon-like peptide 1 receptor (Glp1r) from Mus musculus (Mouse).